The chain runs to 389 residues: Na(+)/H(+) antiporter NhaA 1 (389 aa).

The next 11 helical transmembrane spans lie at 12–32 (VLNEAFGGVLLIVCTLLALLV), 62–82 (FLLWINDGLISIFFFAIGLEL), 97–117 (IVLPFMAALGGILIPAMLFAL), 128–148 (GWAIPTATDTAFALAILMMCG), 157–177 (IFLLSLAIFDDVGAILIIAIF), 184–204 (IAAFVIAGLAILVMLILNLLG), 220–240 (ISVLKSGVHATLAGIVTAFFI), 260–280 (FWIAFIILPLFAFANAGVNLS), 282–302 (IDIGAIFSGVSIGIFLGLFVG), 331–351 (LYGVCILTGIGFTMSLFIDGL), and 365–385 (LAILIASFCSGIWGFIYLKFF).

The protein belongs to the NhaA Na(+)/H(+) (TC 2.A.33) antiporter family.

It is found in the cell inner membrane. The catalysed reaction is Na(+)(in) + 2 H(+)(out) = Na(+)(out) + 2 H(+)(in). Na(+)/H(+) antiporter that extrudes sodium in exchange for external protons. The chain is Na(+)/H(+) antiporter NhaA 1 from Campylobacter jejuni subsp. jejuni serotype O:2 (strain ATCC 700819 / NCTC 11168).